The chain runs to 478 residues: BTB/POZ domain-containing protein 17 (478 aa).

The N-terminal stretch at 1 to 28 (MPRRGYSKPGSWGSFWAMLTLVGLVTHA) is a signal peptide. N-linked (GlcNAc...) asparagine glycans are attached at residues N61, N100, and N195. The region spanning 63-132 (SDVVLRVQAA…LYCGELTVLL (70 aa)) is the BTB domain. Residues 169–269 (AVGWYHYAVG…IPPAQLFQLQ (101 aa)) form the BACK domain.

It localises to the secreted. In Homo sapiens (Human), this protein is BTB/POZ domain-containing protein 17 (BTBD17).